We begin with the raw amino-acid sequence, 485 residues long: Glutamyl-tRNA(Gln) amidotransferase subunit A (485 aa).

Catalysis depends on charge relay system residues Lys-78 and Ser-153. Ser-177 functions as the Acyl-ester intermediate in the catalytic mechanism.

It belongs to the amidase family. GatA subfamily. In terms of assembly, heterotrimer of A, B and C subunits.

It carries out the reaction L-glutamyl-tRNA(Gln) + L-glutamine + ATP + H2O = L-glutaminyl-tRNA(Gln) + L-glutamate + ADP + phosphate + H(+). In terms of biological role, allows the formation of correctly charged Gln-tRNA(Gln) through the transamidation of misacylated Glu-tRNA(Gln) in organisms which lack glutaminyl-tRNA synthetase. The reaction takes place in the presence of glutamine and ATP through an activated gamma-phospho-Glu-tRNA(Gln). The polypeptide is Glutamyl-tRNA(Gln) amidotransferase subunit A (Bacillus cereus (strain G9842)).